A 72-amino-acid polypeptide reads, in one-letter code: EAGEECDCGSPANPCCDAATCKLRPGAQCAEGLCCDQCRFIKKGKICRRARGDNPDDRCTGQSADCPRNRFH.

Residues 1-72 (EAGEECDCGS…SADCPRNRFH (72 aa)) enclose the Disintegrin domain. 6 cysteine pairs are disulfide-bonded: Cys-6–Cys-21, Cys-8–Cys-16, Cys-15–Cys-38, Cys-29–Cys-35, Cys-34–Cys-59, and Cys-47–Cys-66. The Cell attachment site motif lies at 51 to 53 (RGD). The interval 51–72 (RGDNPDDRCTGQSADCPRNRFH) is disordered.

It belongs to the venom metalloproteinase (M12B) family. P-II subfamily. P-IIa sub-subfamily. In terms of assembly, monomer (disintegrin). In terms of tissue distribution, expressed by the venom gland.

It is found in the secreted. In terms of biological role, inhibits fibrinogen interaction with platelet. Acts by binding to alpha-IIb/beta-3 (ITGA2B/ITGB3) on the platelet surface and inhibits aggregation induced by ADP, thrombin, platelet-activating factor and collagen. This is Disintegrin cereberin from Crotalus cerberus (Arizona black rattlesnake).